We begin with the raw amino-acid sequence, 203 residues long: MTDAPDHHPADAAEKRLITETGVAARVAQIVEPSLEGLGFRLVRVRVTGQNGCTVQIMAERPDGTMTVEDCESVSRTISPLLDVDDPIGRAYHLEISSPGIDRPLVRVGDFARWAGHEAKVELTVPLEGRKRFRGIIRAPEGESVRIDLPDAKEGTPASYDLRLRDIGEAHLVLTDALIRESLRRGSAPVEDEEGEGEAPTAH.

The interval 184-203 (RRGSAPVEDEEGEGEAPTAH) is disordered.

Belongs to the RimP family.

The protein localises to the cytoplasm. Required for maturation of 30S ribosomal subunits. This chain is Ribosome maturation factor RimP, found in Methylobacterium nodulans (strain LMG 21967 / CNCM I-2342 / ORS 2060).